The primary structure comprises 336 residues: Putative ataxin-3 homolog (336 aa).

A Josephin domain is found at 10–193 (GGLLYHEVQE…KECPMATEGS (184 aa)). The active-site Nucleophile is the Cys23. The active-site Proton acceptor is the His132. Residue Asn147 is part of the active site. Residues 244 to 263 (QEEADLNAAIAASLMDTGGP) form the UIM domain. The tract at residues 281–336 (IESTSGEMSKDGNLEEQGANKSETSEPNSDNIESASGSNPKQNTTSLEGKESIKED) is disordered. Residues 299–327 (ANKSETSEPNSDNIESASGSNPKQNTTSL) show a composition bias toward polar residues.

Its subcellular location is the nucleus. It carries out the reaction Thiol-dependent hydrolysis of ester, thioester, amide, peptide and isopeptide bonds formed by the C-terminal Gly of ubiquitin (a 76-residue protein attached to proteins as an intracellular targeting signal).. Functionally, interacts with key regulators of transcription and represses transcription. Acts as a histone-binding protein that regulates transcription. Acts as a deubiquitinating enzyme. In Oryza sativa subsp. japonica (Rice), this protein is Putative ataxin-3 homolog.